Here is a 679-residue protein sequence, read N- to C-terminus: Glycine--tRNA ligase beta subunit (679 aa).

The protein belongs to the class-II aminoacyl-tRNA synthetase family. Tetramer of two alpha and two beta subunits.

It is found in the cytoplasm. The enzyme catalyses tRNA(Gly) + glycine + ATP = glycyl-tRNA(Gly) + AMP + diphosphate. This Streptococcus mutans serotype c (strain ATCC 700610 / UA159) protein is Glycine--tRNA ligase beta subunit.